The following is a 140-amino-acid chain: ATP synthase epsilon chain (140 aa).

This sequence belongs to the ATPase epsilon chain family. As to quaternary structure, F-type ATPases have 2 components, CF(1) - the catalytic core - and CF(0) - the membrane proton channel. CF(1) has five subunits: alpha(3), beta(3), gamma(1), delta(1), epsilon(1). CF(0) has three main subunits: a, b and c.

It is found in the cell inner membrane. In terms of biological role, produces ATP from ADP in the presence of a proton gradient across the membrane. In Vibrio vulnificus (strain CMCP6), this protein is ATP synthase epsilon chain.